The primary structure comprises 210 residues: Large ribosomal subunit protein uL4 (210 aa).

The interval His-49–Gly-76 is disordered. Residues Lys-63–Gly-76 show a composition bias toward basic residues.

The protein belongs to the universal ribosomal protein uL4 family. As to quaternary structure, part of the 50S ribosomal subunit.

One of the primary rRNA binding proteins, this protein initially binds near the 5'-end of the 23S rRNA. It is important during the early stages of 50S assembly. It makes multiple contacts with different domains of the 23S rRNA in the assembled 50S subunit and ribosome. In terms of biological role, forms part of the polypeptide exit tunnel. In Thermodesulfovibrio yellowstonii (strain ATCC 51303 / DSM 11347 / YP87), this protein is Large ribosomal subunit protein uL4.